Here is a 105-residue protein sequence, read N- to C-terminus: Small ribosomal subunit protein uS10 (105 aa).

Belongs to the universal ribosomal protein uS10 family. As to quaternary structure, part of the 30S ribosomal subunit.

Functionally, involved in the binding of tRNA to the ribosomes. The polypeptide is Small ribosomal subunit protein uS10 (Nostoc punctiforme (strain ATCC 29133 / PCC 73102)).